The following is a 500-amino-acid chain: Lysine--tRNA ligase (500 aa).

The Mg(2+) site is built by Glu406 and Glu413.

This sequence belongs to the class-II aminoacyl-tRNA synthetase family. As to quaternary structure, homodimer. Requires Mg(2+) as cofactor.

The protein localises to the cytoplasm. The enzyme catalyses tRNA(Lys) + L-lysine + ATP = L-lysyl-tRNA(Lys) + AMP + diphosphate. This chain is Lysine--tRNA ligase, found in Sulfolobus acidocaldarius (strain ATCC 33909 / DSM 639 / JCM 8929 / NBRC 15157 / NCIMB 11770).